The primary structure comprises 230 residues: uncharacterized protein (230 aa).

A run of 7 helical transmembrane segments spans residues Phe34–Gln54, Val56–Phe76, Met87–Ile107, Gly111–Val131, Met146–Ser166, Pro167–Tyr187, and Val205–Phe225.

It belongs to the BI1 family.

Its subcellular location is the cell membrane. This is an uncharacterized protein from Helicobacter pylori (strain J99 / ATCC 700824) (Campylobacter pylori J99).